A 142-amino-acid chain; its full sequence is Large ribosomal subunit protein uL11 (142 aa).

Belongs to the universal ribosomal protein uL11 family. As to quaternary structure, part of the ribosomal stalk of the 50S ribosomal subunit. Interacts with L10 and the large rRNA to form the base of the stalk. L10 forms an elongated spine to which L12 dimers bind in a sequential fashion forming a multimeric L10(L12)X complex. One or more lysine residues are methylated.

Its function is as follows. Forms part of the ribosomal stalk which helps the ribosome interact with GTP-bound translation factors. The protein is Large ribosomal subunit protein uL11 of Bradyrhizobium diazoefficiens (strain JCM 10833 / BCRC 13528 / IAM 13628 / NBRC 14792 / USDA 110).